A 421-amino-acid chain; its full sequence is Imidazolonepropionase (421 aa).

His81 and His83 together coordinate Fe(3+). His81 and His83 together coordinate Zn(2+). Residues Arg90, Tyr153, and His186 each contribute to the 4-imidazolone-5-propanoate site. Tyr153 contacts N-formimidoyl-L-glutamate. A Fe(3+)-binding site is contributed by His251. His251 contacts Zn(2+). Glu254 provides a ligand contact to 4-imidazolone-5-propanoate. Asp326 is a binding site for Fe(3+). Residue Asp326 coordinates Zn(2+). N-formimidoyl-L-glutamate contacts are provided by Asn328 and Gly330. Ser331 is a 4-imidazolone-5-propanoate binding site.

Belongs to the metallo-dependent hydrolases superfamily. HutI family. The cofactor is Zn(2+). Requires Fe(3+) as cofactor.

It localises to the cytoplasm. The enzyme catalyses 4-imidazolone-5-propanoate + H2O = N-formimidoyl-L-glutamate. It participates in amino-acid degradation; L-histidine degradation into L-glutamate; N-formimidoyl-L-glutamate from L-histidine: step 3/3. Its function is as follows. Catalyzes the hydrolytic cleavage of the carbon-nitrogen bond in imidazolone-5-propanoate to yield N-formimidoyl-L-glutamate. It is the third step in the universal histidine degradation pathway. The sequence is that of Imidazolonepropionase from Streptococcus sanguinis (strain SK36).